The primary structure comprises 153 residues: Endoribonuclease YbeY (153 aa).

3 residues coordinate Zn(2+): His113, His117, and His123.

The protein belongs to the endoribonuclease YbeY family. Zn(2+) serves as cofactor.

It is found in the cytoplasm. Single strand-specific metallo-endoribonuclease involved in late-stage 70S ribosome quality control and in maturation of the 3' terminus of the 16S rRNA. This chain is Endoribonuclease YbeY, found in Aliivibrio fischeri (strain MJ11) (Vibrio fischeri).